Consider the following 130-residue polypeptide: Small ribosomal subunit protein uS9 (130 aa).

This sequence belongs to the universal ribosomal protein uS9 family.

In Geobacillus thermodenitrificans (strain NG80-2), this protein is Small ribosomal subunit protein uS9.